The following is a 302-amino-acid chain: Aspartate carbamoyltransferase catalytic subunit (302 aa).

Carbamoyl phosphate contacts are provided by Arg49 and Thr50. L-aspartate is bound at residue Lys77. The carbamoyl phosphate site is built by Arg99, His126, and Gln129. 2 residues coordinate L-aspartate: Arg159 and Arg209. Carbamoyl phosphate-binding residues include Ala250 and Pro251.

It belongs to the aspartate/ornithine carbamoyltransferase superfamily. ATCase family. In terms of assembly, heterododecamer (2C3:3R2) of six catalytic PyrB chains organized as two trimers (C3), and six regulatory PyrI chains organized as three dimers (R2).

The catalysed reaction is carbamoyl phosphate + L-aspartate = N-carbamoyl-L-aspartate + phosphate + H(+). It functions in the pathway pyrimidine metabolism; UMP biosynthesis via de novo pathway; (S)-dihydroorotate from bicarbonate: step 2/3. Catalyzes the condensation of carbamoyl phosphate and aspartate to form carbamoyl aspartate and inorganic phosphate, the committed step in the de novo pyrimidine nucleotide biosynthesis pathway. The chain is Aspartate carbamoyltransferase catalytic subunit from Staphylococcus carnosus (strain TM300).